Consider the following 508-residue polypeptide: Photosystem II CP47 reaction center protein (508 aa).

Helical transmembrane passes span 21 to 36, 101 to 115, 140 to 156, 203 to 218, 237 to 252, and 457 to 472; these read SVHI…WAGS, IVFS…IWHW, GIHL…FGAF, IAAG…FHLS, VLSS…AFVV, and TFAL…HGAR.

The protein belongs to the PsbB/PsbC family. PsbB subfamily. PSII is composed of 1 copy each of membrane proteins PsbA, PsbB, PsbC, PsbD, PsbE, PsbF, PsbH, PsbI, PsbJ, PsbK, PsbL, PsbM, PsbT, PsbX, PsbY, PsbZ, Psb30/Ycf12, at least 3 peripheral proteins of the oxygen-evolving complex and a large number of cofactors. It forms dimeric complexes. The cofactor is Binds multiple chlorophylls. PSII binds additional chlorophylls, carotenoids and specific lipids..

The protein localises to the plastid. The protein resides in the chloroplast thylakoid membrane. Functionally, one of the components of the core complex of photosystem II (PSII). It binds chlorophyll and helps catalyze the primary light-induced photochemical processes of PSII. PSII is a light-driven water:plastoquinone oxidoreductase, using light energy to abstract electrons from H(2)O, generating O(2) and a proton gradient subsequently used for ATP formation. This Chloranthus spicatus (Chulantree) protein is Photosystem II CP47 reaction center protein.